The chain runs to 145 residues: Peptide methionine sulfoxide reductase MsrB (145 aa).

The 124-residue stretch at 6–129 (KNERLKQLTD…NSAALRFIPV (124 aa)) folds into the MsrB domain. C118 (nucleophile) is an active-site residue.

It belongs to the MsrB Met sulfoxide reductase family.

It carries out the reaction L-methionyl-[protein] + [thioredoxin]-disulfide + H2O = L-methionyl-(R)-S-oxide-[protein] + [thioredoxin]-dithiol. This is Peptide methionine sulfoxide reductase MsrB from Listeria innocua serovar 6a (strain ATCC BAA-680 / CLIP 11262).